The sequence spans 313 residues: Acetyl-coenzyme A carboxylase carboxyl transferase subunit alpha (313 aa).

Positions 42–292 (KSDKLLRDTY…GAAIGEELDK (251 aa)) constitute a CoA carboxyltransferase C-terminal domain.

Belongs to the AccA family. In terms of assembly, acetyl-CoA carboxylase is a heterohexamer composed of biotin carboxyl carrier protein (AccB), biotin carboxylase (AccC) and two subunits each of ACCase subunit alpha (AccA) and ACCase subunit beta (AccD).

Its subcellular location is the cytoplasm. It carries out the reaction N(6)-carboxybiotinyl-L-lysyl-[protein] + acetyl-CoA = N(6)-biotinyl-L-lysyl-[protein] + malonyl-CoA. It participates in lipid metabolism; malonyl-CoA biosynthesis; malonyl-CoA from acetyl-CoA: step 1/1. Functionally, component of the acetyl coenzyme A carboxylase (ACC) complex. First, biotin carboxylase catalyzes the carboxylation of biotin on its carrier protein (BCCP) and then the CO(2) group is transferred by the carboxyltransferase to acetyl-CoA to form malonyl-CoA. In Rhizorhabdus wittichii (strain DSM 6014 / CCUG 31198 / JCM 15750 / NBRC 105917 / EY 4224 / RW1) (Sphingomonas wittichii), this protein is Acetyl-coenzyme A carboxylase carboxyl transferase subunit alpha.